We begin with the raw amino-acid sequence, 820 residues long: Leucine--tRNA ligase (820 aa).

Positions 42–52 match the 'HIGH' region motif; it reads PYPSGDLHMGH. A 'KMSKS' region motif is present at residues 576 to 580; that stretch reads KMSKS. Residue K579 coordinates ATP.

This sequence belongs to the class-I aminoacyl-tRNA synthetase family.

Its subcellular location is the cytoplasm. It carries out the reaction tRNA(Leu) + L-leucine + ATP = L-leucyl-tRNA(Leu) + AMP + diphosphate. The chain is Leucine--tRNA ligase from Coxiella burnetii (strain Dugway 5J108-111).